The sequence spans 493 residues: ATP synthase subunit beta (493 aa).

Residue 169–176 participates in ATP binding; that stretch reads GGAGVGKT.

The protein belongs to the ATPase alpha/beta chains family. As to quaternary structure, F-type ATPases have 2 components, CF(1) - the catalytic core - and CF(0) - the membrane proton channel. CF(1) has five subunits: alpha(3), beta(3), gamma(1), delta(1), epsilon(1). CF(0) has three main subunits: a(1), b(2) and c(9-12). The alpha and beta chains form an alternating ring which encloses part of the gamma chain. CF(1) is attached to CF(0) by a central stalk formed by the gamma and epsilon chains, while a peripheral stalk is formed by the delta and b chains.

The protein localises to the cell inner membrane. The catalysed reaction is ATP + H2O + 4 H(+)(in) = ADP + phosphate + 5 H(+)(out). Produces ATP from ADP in the presence of a proton gradient across the membrane. The catalytic sites are hosted primarily by the beta subunits. The polypeptide is ATP synthase subunit beta (Gluconacetobacter diazotrophicus (strain ATCC 49037 / DSM 5601 / CCUG 37298 / CIP 103539 / LMG 7603 / PAl5)).